A 313-amino-acid polypeptide reads, in one-letter code: Fucose-specific lectin (313 aa).

6 tandem repeats follow at residues 5 to 57 (FLYT…VIGE), 58 to 109 (AKLF…VGVK), 110 to 162 (VGSN…SFGS), 163 to 208 (TVPG…FSAS), 209 to 260 (ASAG…RPTP), and 261 to 304 (SLPD…IGAV). Positions 5-304 (FLYTSKIAAI…SGKGWSIGAV (300 aa)) are 6 X approximate tandem repeats. Residues arginine 25, glutamate 37, arginine 78, glutamate 90, tryptophan 98, glutamine 102, arginine 132, glutamate 147, and tryptophan 154 each contribute to the beta-L-fucose site. Alpha-L-fucose contacts are provided by arginine 78 and glutamate 90. Glutamine 102 contacts alpha-L-fucose. Residues tryptophan 154, arginine 180, and glutamate 192 each contribute to the alpha-L-fucose site. Position 200 (tryptophan 200) interacts with beta-L-fucose. Residue glycine 204 participates in alpha-L-fucose binding. Residues arginine 227 and glutamate 239 each coordinate beta-L-fucose. Tryptophan 246 is an alpha-L-fucose binding site. Tryptophan 299 contributes to the beta-L-fucose binding site.

It belongs to the fungal fucose-specific lectin family. In terms of assembly, forms homodimers. The two AAL monomers are associated via interactions between N-terminal and C-terminal peptides. Tyr-7 interacts via aromatic ring stacking with its counterpart on the other monomer, whereas Ser-284 interacts via hydrogen bonding with Asp-264 on the other monomer.

In terms of biological role, lectin that specifically binds to L-fucose. Has strongest preference for the alpha-1,6-fucosylated chain (core fucose) on glycoproteins among alpha-1,2-, alpha-1,3-, alpha-1,4-, and alpha-1,6-fucosylated chains. Might play a role in the differentiation of the fruiting body. Exhibits antifungal activity against Mucor racemosus and thus could act as an antifungal protein in natural ecosystems. The protein is Fucose-specific lectin of Aleuria aurantia (Orange peel mushroom).